The following is an 80-amino-acid chain: Ubiquitin-like protein NEDD8-like protein 2 (80 aa).

The protein belongs to the ubiquitin family.

The protein is Ubiquitin-like protein NEDD8-like protein 2 (nedd8l2) of Dictyostelium discoideum (Social amoeba).